The sequence spans 556 residues: Glucose-6-phosphate isomerase (556 aa).

Glu360 functions as the Proton donor in the catalytic mechanism. Residues His391 and Lys519 contribute to the active site.

Belongs to the GPI family.

It is found in the cytoplasm. The catalysed reaction is alpha-D-glucose 6-phosphate = beta-D-fructose 6-phosphate. It functions in the pathway carbohydrate biosynthesis; gluconeogenesis. It participates in carbohydrate degradation; glycolysis; D-glyceraldehyde 3-phosphate and glycerone phosphate from D-glucose: step 2/4. Functionally, catalyzes the reversible isomerization of glucose-6-phosphate to fructose-6-phosphate. In Acinetobacter baumannii (strain ATCC 17978 / DSM 105126 / CIP 53.77 / LMG 1025 / NCDC KC755 / 5377), this protein is Glucose-6-phosphate isomerase.